Reading from the N-terminus, the 235-residue chain is Sugar fermentation stimulation protein homolog (235 aa).

It belongs to the SfsA family.

This Allorhizobium ampelinum (strain ATCC BAA-846 / DSM 112012 / S4) (Agrobacterium vitis (strain S4)) protein is Sugar fermentation stimulation protein homolog.